A 154-amino-acid polypeptide reads, in one-letter code: Superoxide dismutase [Cu-Zn] (154 aa).

Residues histidine 47, histidine 49, and histidine 64 each coordinate Cu cation. Residues cysteine 58 and cysteine 147 are joined by a disulfide bond. Zn(2+) contacts are provided by histidine 64, histidine 72, histidine 81, and aspartate 84. Histidine 121 contributes to the Cu cation binding site. Over residues 125-137 the composition is skewed to basic and acidic residues; sequence DDLGRGGNEESKK. The interval 125 to 147 is disordered; that stretch reads DDLGRGGNEESKKTGNAGPRPAC. Arginine 144 is a binding site for substrate.

As to quaternary structure, homodimer. Cu cation is required as a cofactor. The cofactor is Zn(2+).

It localises to the cytoplasm. The enzyme catalyses 2 superoxide + 2 H(+) = H2O2 + O2. Functionally, destroys radicals which are normally produced within the cells and which are toxic to biological systems. The chain is Superoxide dismutase [Cu-Zn] from Aspergillus niger.